A 242-amino-acid chain; its full sequence is Glycerol-3-phosphate acyltransferase (242 aa).

6 consecutive transmembrane segments (helical) span residues 7-27 (ISLL…IMFA), 61-81 (IAIG…ILLI), 102-122 (YYLT…PVYF), 135-155 (GFVF…WWTI), 162-182 (VSLA…IPWL), and 201-221 (DWYI…IIIW).

The protein belongs to the PlsY family. As to quaternary structure, probably interacts with PlsX.

It is found in the cell membrane. It carries out the reaction an acyl phosphate + sn-glycerol 3-phosphate = a 1-acyl-sn-glycero-3-phosphate + phosphate. The protein operates within lipid metabolism; phospholipid metabolism. Its function is as follows. Catalyzes the transfer of an acyl group from acyl-phosphate (acyl-PO(4)) to glycerol-3-phosphate (G3P) to form lysophosphatidic acid (LPA). This enzyme utilizes acyl-phosphate as fatty acyl donor, but not acyl-CoA or acyl-ACP. The sequence is that of Glycerol-3-phosphate acyltransferase from Mycoplasmoides gallisepticum (strain R(low / passage 15 / clone 2)) (Mycoplasma gallisepticum).